Reading from the N-terminus, the 269-residue chain is Protein LNK3 (269 aa).

Interacts with REV8.

In terms of biological role, probable transcriptional coactivator. This is Protein LNK3 from Arabidopsis thaliana (Mouse-ear cress).